The primary structure comprises 948 residues: Bifunctional uridylyltransferase/uridylyl-removing enzyme (948 aa).

The tract at residues 1 to 372 (METHHIDFST…RFANRSRKIP (372 aa)) is uridylyltransferase. The segment at 373–728 (GTVEFVEDRG…VRTDSFHAIT (356 aa)) is uridylyl-removing. The HD domain maps to 489–605 (VDEHLIRAVE…IDFADRVQSL (117 aa)). ACT domains lie at 729-810 (EITV…EVIA) and 840-921 (VIEV…ERMP).

The protein belongs to the GlnD family. Requires Mg(2+) as cofactor.

The enzyme catalyses [protein-PII]-L-tyrosine + UTP = [protein-PII]-uridylyl-L-tyrosine + diphosphate. The catalysed reaction is [protein-PII]-uridylyl-L-tyrosine + H2O = [protein-PII]-L-tyrosine + UMP + H(+). With respect to regulation, uridylyltransferase (UTase) activity is inhibited by glutamine, while glutamine activates uridylyl-removing (UR) activity. In terms of biological role, modifies, by uridylylation and deuridylylation, the PII regulatory proteins (GlnB and homologs), in response to the nitrogen status of the cell that GlnD senses through the glutamine level. Under low glutamine levels, catalyzes the conversion of the PII proteins and UTP to PII-UMP and PPi, while under higher glutamine levels, GlnD hydrolyzes PII-UMP to PII and UMP (deuridylylation). Thus, controls uridylylation state and activity of the PII proteins, and plays an important role in the regulation of nitrogen fixation and metabolism. The chain is Bifunctional uridylyltransferase/uridylyl-removing enzyme from Rhizobium tropici.